A 337-amino-acid chain; its full sequence is Tetraacyldisaccharide 4'-kinase (337 aa).

55–62 (TIGGNGKT) is a binding site for ATP.

This sequence belongs to the LpxK family.

It carries out the reaction a lipid A disaccharide + ATP = a lipid IVA + ADP + H(+). The protein operates within glycolipid biosynthesis; lipid IV(A) biosynthesis; lipid IV(A) from (3R)-3-hydroxytetradecanoyl-[acyl-carrier-protein] and UDP-N-acetyl-alpha-D-glucosamine: step 6/6. Transfers the gamma-phosphate of ATP to the 4'-position of a tetraacyldisaccharide 1-phosphate intermediate (termed DS-1-P) to form tetraacyldisaccharide 1,4'-bis-phosphate (lipid IVA). The chain is Tetraacyldisaccharide 4'-kinase from Blochmanniella pennsylvanica (strain BPEN).